The sequence spans 901 residues: Protein translocase subunit SecA (901 aa).

ATP-binding positions include Q85, 103-107 (GEGKT), and D492. The tract at residues 828–901 (GLVTDDGGNP…PKNRRNKKRR (74 aa)) is disordered. A compositionally biased stretch (basic and acidic residues) spans 871 to 881 (DGQKPRGEGNR). Positions 882–901 (AARRSAASKKPKNRRNKKRR) are enriched in basic residues.

This sequence belongs to the SecA family. As to quaternary structure, monomer and homodimer. Part of the essential Sec protein translocation apparatus which comprises SecA, SecYEG and auxiliary proteins SecDF. Other proteins may also be involved.

It is found in the cell membrane. The protein resides in the cytoplasm. The enzyme catalyses ATP + H2O + cellular proteinSide 1 = ADP + phosphate + cellular proteinSide 2.. Part of the Sec protein translocase complex. Interacts with the SecYEG preprotein conducting channel. Has a central role in coupling the hydrolysis of ATP to the transfer of proteins into and across the cell membrane, serving as an ATP-driven molecular motor driving the stepwise translocation of polypeptide chains across the membrane. The protein is Protein translocase subunit SecA of Cutibacterium acnes (strain DSM 16379 / KPA171202) (Propionibacterium acnes).